The primary structure comprises 473 residues: Lactate utilization protein B (473 aa).

4Fe-4S ferredoxin-type domains are found at residues 302–332 (GSEF…GHSY) and 351–380 (YNDY…LHDL). C311, C314, C317, C321, C364, C367, and C371 together coordinate [4Fe-4S] cluster.

This sequence belongs to the LutB/YkgF family.

Is involved in L-lactate degradation and allows cells to grow with lactate as the sole carbon source. Has probably a role as an electron transporter during oxidation of L-lactate. This is Lactate utilization protein B from Bacillus cereus (strain AH820).